We begin with the raw amino-acid sequence, 182 residues long: Isopentenyl-diphosphate Delta-isomerase (182 aa).

Mn(2+) contacts are provided by His-25 and His-32. Residues Pro-30 to Met-164 enclose the Nudix hydrolase domain. Cys-67 is an active-site residue. Residue His-69 coordinates Mn(2+). Glu-87 contacts Mg(2+). Glu-114 and Glu-116 together coordinate Mn(2+). Glu-116 is an active-site residue.

Belongs to the IPP isomerase type 1 family. As to quaternary structure, homodimer. Mg(2+) serves as cofactor. Mn(2+) is required as a cofactor.

The protein localises to the cytoplasm. It catalyses the reaction isopentenyl diphosphate = dimethylallyl diphosphate. It functions in the pathway isoprenoid biosynthesis; dimethylallyl diphosphate biosynthesis; dimethylallyl diphosphate from isopentenyl diphosphate: step 1/1. Functionally, catalyzes the 1,3-allylic rearrangement of the homoallylic substrate isopentenyl (IPP) to its highly electrophilic allylic isomer, dimethylallyl diphosphate (DMAPP). The chain is Isopentenyl-diphosphate Delta-isomerase from Salmonella arizonae (strain ATCC BAA-731 / CDC346-86 / RSK2980).